A 370-amino-acid polypeptide reads, in one-letter code: tRNA-specific 2-thiouridylase MnmA (370 aa).

Residues 25-32 (ALSGGVDS) and leucine 51 each bind ATP. The active-site Nucleophile is the cysteine 112. An intrachain disulfide couples cysteine 112 to cysteine 211. An ATP-binding site is contributed by glycine 137. The interval 161–163 (KDQ) is interaction with tRNA. Catalysis depends on cysteine 211, which acts as the Cysteine persulfide intermediate. Positions 316–317 (RY) are interaction with tRNA.

Belongs to the MnmA/TRMU family.

It localises to the cytoplasm. The catalysed reaction is S-sulfanyl-L-cysteinyl-[protein] + uridine(34) in tRNA + AH2 + ATP = 2-thiouridine(34) in tRNA + L-cysteinyl-[protein] + A + AMP + diphosphate + H(+). Catalyzes the 2-thiolation of uridine at the wobble position (U34) of tRNA, leading to the formation of s(2)U34. This chain is tRNA-specific 2-thiouridylase MnmA, found in Synechococcus sp. (strain JA-3-3Ab) (Cyanobacteria bacterium Yellowstone A-Prime).